The chain runs to 233 residues: Large ribosomal subunit protein uL1 (233 aa).

It belongs to the universal ribosomal protein uL1 family. Part of the 50S ribosomal subunit.

In terms of biological role, binds directly to 23S rRNA. The L1 stalk is quite mobile in the ribosome, and is involved in E site tRNA release. Functionally, protein L1 is also a translational repressor protein, it controls the translation of the L11 operon by binding to its mRNA. The polypeptide is Large ribosomal subunit protein uL1 (Parvibaculum lavamentivorans (strain DS-1 / DSM 13023 / NCIMB 13966)).